Consider the following 282-residue polypeptide: Tryptophan 2,3-dioxygenase (282 aa).

Residues Phe51–His55, Tyr113, and Arg117 each bind substrate. His240 provides a ligand contact to heme. Thr254 lines the substrate pocket.

It belongs to the tryptophan 2,3-dioxygenase family. As to quaternary structure, homotetramer. Heme serves as cofactor.

It carries out the reaction L-tryptophan + O2 = N-formyl-L-kynurenine. The protein operates within amino-acid degradation; L-tryptophan degradation via kynurenine pathway; L-kynurenine from L-tryptophan: step 1/2. Its function is as follows. Heme-dependent dioxygenase that catalyzes the oxidative cleavage of the L-tryptophan (L-Trp) pyrrole ring and converts L-tryptophan to N-formyl-L-kynurenine. Catalyzes the oxidative cleavage of the indole moiety. The protein is Tryptophan 2,3-dioxygenase of Polaromonas naphthalenivorans (strain CJ2).